Here is a 475-residue protein sequence, read N- to C-terminus: uncharacterized protein (475 aa).

Residues 19-39 (LVSAILILSILIWLIITIFFA) traverse the membrane as a helical segment.

The protein localises to the membrane. This is an uncharacterized protein from Mycoplasma pneumoniae (strain ATCC 29342 / M129 / Subtype 1) (Mycoplasmoides pneumoniae).